A 215-amino-acid polypeptide reads, in one-letter code: Glutathione S-transferase-like protein (215 aa).

A GST N-terminal domain is found at 1–76; that stretch reads MPNARILKIQ…YVAASGPAAP (76 aa). The GST C-terminal domain occupies 82 to 215; that stretch reads NVAEQAAVRQ…LVAVRKEASV (134 aa).

Belongs to the GST superfamily.

The protein is Glutathione S-transferase-like protein of Aspergillus aculeatus (strain ATCC 16872 / CBS 172.66 / WB 5094).